We begin with the raw amino-acid sequence, 786 residues long: MANILKKWVESDARELKRLGKKADKIEALKEEMEQLNDEKLKAKTTEFKERLQNGETLDDILVEAFAVAREAAKRVLGLFPFRVQLIGGMVLHGGNIAEMKTGEGKTLTATLPVYLNALGGKGVHVVTVNEYLAERDSSEMGELYKWLGLTVGVNSSEMTPDQKREAYNCDITYSTNSEIGFDYLRDNMVVYKEDMVQRPLNFALIDEVDSILIDEARTPLIISGQTEPTVTLYERADRYVKTLADGDYTIDWESKSISLTENGIRRAENFFKTDNLYDVENSALNHHIDQALRANYIMTKDKDYVVSDGEVLIVDSFTGRVMEGRRFSDGLHQAIEAKEHVEIQDGAKTMANITYQNLFRMYRKLSGMTGTARTEAEEFREIYNMEVTTIPTNRPVARDDRPDLLYPTLESKFKAVVKEIRDLHIKGQPVLVGTVAVETSEYLSRLLDREGIPHVVLNAKNHAREAEIVTNAGQKGAVTIATNMAGRGTDIKLGPGVVELGGLAVIGTERHESRRIDNQLRGRSGRQGDVGMSQFYLSLEDDLMIRFGSERIKDLLSRMKIADEDAVIRSGLISRQVESAQKRVEGNNYDARKNVLQYDDVMRAQREVIYAERQQVIMEETSLKDVLMPMVDRTIDRVVDAHTQKTQKNFDLETIVEFARTALVSDKDIHQADVEGMSAKEIKDYLKQLADQMYIEKEKALYDPAQILEFEKVVILRVVDQHWTDHIDAMDQLRQSVGLRGYGQLNPLVEYQQEGYRMFNEMITDIEYETTRLFMKSEIRQNLQR.

ATP is bound by residues Gln85, Gly103–Thr107, and Asp491.

This sequence belongs to the SecA family. In terms of assembly, monomer and homodimer. Part of the essential Sec protein translocation apparatus which comprises SecA, SecYEG and auxiliary proteins SecDF. Other proteins may also be involved.

It is found in the cell membrane. The protein localises to the cytoplasm. The enzyme catalyses ATP + H2O + cellular proteinSide 1 = ADP + phosphate + cellular proteinSide 2.. In terms of biological role, part of the Sec protein translocase complex. Interacts with the SecYEG preprotein conducting channel. Has a central role in coupling the hydrolysis of ATP to the transfer of proteins into and across the cell membrane, serving as an ATP-driven molecular motor driving the stepwise translocation of polypeptide chains across the membrane. In Pediococcus pentosaceus (strain ATCC 25745 / CCUG 21536 / LMG 10740 / 183-1w), this protein is Protein translocase subunit SecA 1.